The primary structure comprises 487 residues: Calcium-binding tyrosine phosphorylation-regulated protein (487 aa).

Residues Tyr12 to Gly49 form the RIIa domain. 2 stretches are compositionally biased toward basic and acidic residues: residues Lys78–Val91 and Lys101–Asp117. 3 disordered regions span residues Lys78–Pro163, Val243–Pro271, and Ile420–Glu487. Low complexity predominate over residues Ser140–Pro152. Polar residues-rich tracts occupy residues Ile420–Pro436 and Ser455–Gly464. Over residues Ile478–Glu487 the composition is skewed to acidic residues.

As to quaternary structure, interacts with FSCB. In terms of processing, phosphorylated on tyrosine residues during in vitro capacitation. Dephosphorylation affects its ability to bind calcium.

It is found in the cytoplasm. It localises to the cytoskeleton. Its subcellular location is the cell projection. The protein localises to the cilium. The protein resides in the flagellum. Functionally, may function as a regulator of both motility- and head-associated functions such as capacitation and the acrosome reaction. May bind calcium in vitro. This is Calcium-binding tyrosine phosphorylation-regulated protein (CABYR) from Macaca fascicularis (Crab-eating macaque).